A 523-amino-acid polypeptide reads, in one-letter code: Probable malate:quinone oxidoreductase (523 aa).

It belongs to the MQO family. The cofactor is FAD.

The catalysed reaction is (S)-malate + a quinone = a quinol + oxaloacetate. It participates in carbohydrate metabolism; tricarboxylic acid cycle; oxaloacetate from (S)-malate (quinone route): step 1/1. The protein is Probable malate:quinone oxidoreductase of Agrobacterium fabrum (strain C58 / ATCC 33970) (Agrobacterium tumefaciens (strain C58)).